Here is a 68-residue protein sequence, read N- to C-terminus: Large ribosomal subunit protein bL32 (68 aa).

It belongs to the bacterial ribosomal protein bL32 family.

This is Large ribosomal subunit protein bL32 from Aster yellows witches'-broom phytoplasma (strain AYWB).